Here is a 596-residue protein sequence, read N- to C-terminus: Nodulation outer protein X (596 aa).

Its subcellular location is the secreted. The chain is Nodulation outer protein X (nopX) from Sinorhizobium fredii (strain NBRC 101917 / NGR234).